The sequence spans 210 residues: Ribosomal RNA large subunit methyltransferase E (210 aa).

Residues glycine 61, tryptophan 63, aspartate 81, aspartate 97, and aspartate 122 each coordinate S-adenosyl-L-methionine. The Proton acceptor role is filled by lysine 162.

This sequence belongs to the class I-like SAM-binding methyltransferase superfamily. RNA methyltransferase RlmE family.

The protein localises to the cytoplasm. The catalysed reaction is uridine(2552) in 23S rRNA + S-adenosyl-L-methionine = 2'-O-methyluridine(2552) in 23S rRNA + S-adenosyl-L-homocysteine + H(+). Its function is as follows. Specifically methylates the uridine in position 2552 of 23S rRNA at the 2'-O position of the ribose in the fully assembled 50S ribosomal subunit. This Xanthomonas axonopodis pv. citri (strain 306) protein is Ribosomal RNA large subunit methyltransferase E.